The following is a 200-amino-acid chain: Imidazoleglycerol-phosphate dehydratase (200 aa).

Belongs to the imidazoleglycerol-phosphate dehydratase family.

The protein localises to the cytoplasm. It carries out the reaction D-erythro-1-(imidazol-4-yl)glycerol 3-phosphate = 3-(imidazol-4-yl)-2-oxopropyl phosphate + H2O. The protein operates within amino-acid biosynthesis; L-histidine biosynthesis; L-histidine from 5-phospho-alpha-D-ribose 1-diphosphate: step 6/9. This is Imidazoleglycerol-phosphate dehydratase from Chlorobium phaeobacteroides (strain BS1).